A 480-amino-acid polypeptide reads, in one-letter code: MFS-type transporter oryF (480 aa).

A compositionally biased stretch (basic and acidic residues) spans 1-10 (MAEEVNERTR). The disordered stretch occupies residues 1–24 (MAEEVNERTRLLSQSDDPSPSLEE). A compositionally biased stretch (low complexity) spans 11-22 (LLSQSDDPSPSL). The next 12 helical transmembrane spans lie at 41–61 (LCIAVISVYGLISPVIAAIIV), 81–101 (AFVSVYVLGWSFAPLVVGPLS), 107–127 (ISLLNTGHGLFLVFNALCAFA), 138–158 (FITGAVGSAPLSIGAGIIGDL), 170–190 (LYTLGPLLGPAIAPITGAYIV), 197–217 (AIFAWCSLYILITWVVGLCTL), 264–284 (FLGTQPIIQVLSLFMGYLFGL), 308–328 (ALNYISIAGGFILGSQITGSL), 351–371 (ILMLPAALLVPTGLLIYGWSA), 378–398 (IMPNIGIGIYALGLIMSYQCI), 415–435 (GALTILRSLLGFVLPILAPLI), and 443–463 (WGSSLLALWALVMGGLVPILL).

It belongs to the major facilitator superfamily.

The protein localises to the membrane. Its function is as follows. MFS-type transporter; part of the gene cluster that mediates the biosynthesis of oryzines, natural products with an unusual maleidride backbone. This is MFS-type transporter oryF from Aspergillus oryzae (strain ATCC 42149 / RIB 40) (Yellow koji mold).